A 433-amino-acid chain; its full sequence is Adenylosuccinate synthetase (433 aa).

Residues 18–24 and 46–48 each bind GTP; these read GDEGKGK and GHT. The Proton acceptor role is filled by aspartate 19. Mg(2+) contacts are provided by aspartate 19 and glycine 46. IMP contacts are provided by residues 19–22, 44–47, threonine 136, arginine 150, glutamine 229, threonine 244, and arginine 308; these read DEGK and NAGH. Histidine 47 serves as the catalytic Proton donor. 304–310 provides a ligand contact to substrate; the sequence is VTTKRMR. Residues arginine 310, 336-338, and 420-422 each bind GTP; these read KID and GTG.

This sequence belongs to the adenylosuccinate synthetase family. In terms of assembly, homodimer. Mg(2+) is required as a cofactor.

It localises to the cytoplasm. The catalysed reaction is IMP + L-aspartate + GTP = N(6)-(1,2-dicarboxyethyl)-AMP + GDP + phosphate + 2 H(+). It functions in the pathway purine metabolism; AMP biosynthesis via de novo pathway; AMP from IMP: step 1/2. Functionally, plays an important role in the de novo pathway and in the salvage pathway of purine nucleotide biosynthesis. Catalyzes the first committed step in the biosynthesis of AMP from IMP. The sequence is that of Adenylosuccinate synthetase from Schistosoma japonicum (Blood fluke).